The chain runs to 1184 residues: DNA polymerase III subunit alpha (1184 aa).

The protein belongs to the DNA polymerase type-C family. DnaE subfamily. The Pol III holoenzyme complex contains at least 10 different subunits organized into 3 functionally essential subassemblies: the Pol III core, the beta sliding clamp processivity factor and the clamp-loading complex. The Pol III core (subunits alpha, epsilon and theta) contains the polymerase and the 3'-5' exonuclease proofreading activities. The polymerase is tethered to the template via the dimeric beta sliding clamp processivity factor. The clamp loader (also called gamma complex) assembles the beta sliding clamp onto the primed template and plays a central role in the organization and communication at the replication fork. The clamp-loading complex contains delta, delta', psi and chi, and 3 copies of either or both of two different DnaX proteins, gamma and tau. The DNA replisome complex has a single clamp loader (3 tau and 1 each of delta, delta', psi and chi subunits) which binds 3 Pol III cores (1 core on the leading strand and 2 on the lagging strand) each with a beta sliding clamp dimer. Interacts with the beta-sliding clamp (DnaN). Co-immunoprecipitates with DarG in the presence and absence of darT.

It is found in the cytoplasm. The catalysed reaction is DNA(n) + a 2'-deoxyribonucleoside 5'-triphosphate = DNA(n+1) + diphosphate. In terms of biological role, DNA polymerase III is a complex, multichain enzyme responsible for most of the replicative synthesis in bacteria. Pol III also exhibits 3' to 5' exonuclease activity. The alpha chain is the DNA polymerase. This chain is DNA polymerase III subunit alpha (dnaE1), found in Mycobacterium tuberculosis (strain ATCC 25618 / H37Rv).